Consider the following 193-residue polypeptide: Acyl carrier protein phosphodiesterase (193 aa).

Belongs to the AcpH family.

It carries out the reaction holo-[ACP] + H2O = apo-[ACP] + (R)-4'-phosphopantetheine + H(+). Its function is as follows. Converts holo-ACP to apo-ACP by hydrolytic cleavage of the phosphopantetheine prosthetic group from ACP. This is Acyl carrier protein phosphodiesterase from Escherichia coli O127:H6 (strain E2348/69 / EPEC).